Reading from the N-terminus, the 452-residue chain is PTS system N-acetylglucosamine-specific EIICB component (452 aa).

A PTS EIIC type-1 domain is found at 1-361 (MLSFLQKLGK…LNLKTPGRED (361 aa)). 9 helical membrane-spanning segments follow: residues 8 to 28 (LGKS…ILAL), 42 to 62 (AGTA…AIGI), 91 to 111 (TNNM…YTYN), 130 to 150 (LVPI…GVVW), 163 to 183 (WMLG…RLLI), 223 to 243 (MTGF…AMVV), 257 to 277 (MIGF…EFAF), 279 to 299 (FLSP…LFIV), and 329 to 349 (LLLL…YVLI). The PTS EIIB type-1 domain maps to 375–452 (DVNENIMLKG…AAEELRAAVK (78 aa)). Cys-397 functions as the Phosphocysteine intermediate; for EIIB activity in the catalytic mechanism.

Interacts with FloT.

The protein localises to the cell membrane. It is found in the membrane raft. The enzyme catalyses N(pros)-phospho-L-histidyl-[protein] + N-acetyl-D-glucosamine(out) = N-acetyl-D-glucosamine 6-phosphate(in) + L-histidyl-[protein]. Functionally, the phosphoenolpyruvate-dependent sugar phosphotransferase system (sugar PTS), a major carbohydrate active -transport system, catalyzes the phosphorylation of incoming sugar substrates concomitantly with their translocation across the cell membrane. This system is involved in N-acetylglucosamine transport. The chain is PTS system N-acetylglucosamine-specific EIICB component (nagP) from Bacillus subtilis (strain 168).